Here is a 573-residue protein sequence, read N- to C-terminus: Heat shock protein 60A (573 aa).

The N-terminal 57 residues, 1-57 (MFRLPVSLARSSISRQLAMRGYAKDVRFGPEVRAMMLQGVDVLADAVAVTMGPKGRN), are a transit peptide targeting the mitochondrion.

Belongs to the chaperonin (HSP60) family.

Its subcellular location is the mitochondrion matrix. In terms of biological role, prevents misfolding and promotes the refolding and proper assembly of unfolded polypeptides generated under stress conditions. This is Heat shock protein 60A from Drosophila melanogaster (Fruit fly).